The primary structure comprises 191 residues: Large ribosomal subunit protein bL25 (191 aa).

The protein belongs to the bacterial ribosomal protein bL25 family. CTC subfamily. Part of the 50S ribosomal subunit; part of the 5S rRNA/L5/L18/L25 subcomplex. Contacts the 5S rRNA. Binds to the 5S rRNA independently of L5 and L18.

This is one of the proteins that binds to the 5S RNA in the ribosome where it forms part of the central protuberance. The chain is Large ribosomal subunit protein bL25 from Nitratidesulfovibrio vulgaris (strain DSM 19637 / Miyazaki F) (Desulfovibrio vulgaris).